The following is a 130-amino-acid chain: Large ribosomal subunit protein bL17 (130 aa).

The protein belongs to the bacterial ribosomal protein bL17 family. As to quaternary structure, part of the 50S ribosomal subunit. Contacts protein L32.

In Buchnera aphidicola subsp. Acyrthosiphon pisum (strain APS) (Acyrthosiphon pisum symbiotic bacterium), this protein is Large ribosomal subunit protein bL17.